The chain runs to 314 residues: tRNA dimethylallyltransferase (314 aa).

13 to 20 (GPTASGKS) serves as a coordination point for ATP. 15-20 (TASGKS) provides a ligand contact to substrate. Interaction with substrate tRNA regions lie at residues 38–41 (DSMQ) and 161–165 (QRIAR).

The protein belongs to the IPP transferase family. Monomer. It depends on Mg(2+) as a cofactor.

It carries out the reaction adenosine(37) in tRNA + dimethylallyl diphosphate = N(6)-dimethylallyladenosine(37) in tRNA + diphosphate. Its function is as follows. Catalyzes the transfer of a dimethylallyl group onto the adenine at position 37 in tRNAs that read codons beginning with uridine, leading to the formation of N6-(dimethylallyl)adenosine (i(6)A). The sequence is that of tRNA dimethylallyltransferase from Parvibaculum lavamentivorans (strain DS-1 / DSM 13023 / NCIMB 13966).